Reading from the N-terminus, the 511-residue chain is Movement protein (511 aa).

Its subcellular location is the host cell junction. The protein localises to the host plasmodesma. It is found in the host cytoplasm. In terms of biological role, transports viral genome to neighboring plant cells directly through plasmosdesmata, without any budding. The movement protein allows efficient cell to cell propagation, by bypassing the host cell wall barrier. This Rice gall dwarf virus (RGDV) protein is Movement protein.